The chain runs to 403 residues: Coenzyme A biosynthesis bifunctional protein CoaBC (403 aa).

The segment at 1–197 (MLHHVKLIYA…LHPKSLEGKR (197 aa)) is phosphopantothenoylcysteine decarboxylase. The tract at residues 198–403 (VLVTAGATRE…RLWDEIEKML (206 aa)) is phosphopantothenate--cysteine ligase. CTP-binding residues include aspartate 287, lysine 297, and phenylalanine 330.

It in the N-terminal section; belongs to the HFCD (homo-oligomeric flavin containing Cys decarboxylase) superfamily. The protein in the C-terminal section; belongs to the PPC synthetase family. It depends on Mg(2+) as a cofactor. FMN serves as cofactor.

It catalyses the reaction N-[(R)-4-phosphopantothenoyl]-L-cysteine + H(+) = (R)-4'-phosphopantetheine + CO2. The enzyme catalyses (R)-4'-phosphopantothenate + L-cysteine + CTP = N-[(R)-4-phosphopantothenoyl]-L-cysteine + CMP + diphosphate + H(+). The protein operates within cofactor biosynthesis; coenzyme A biosynthesis. In terms of biological role, catalyzes two sequential steps in the biosynthesis of coenzyme A. In the first step cysteine is conjugated to 4'-phosphopantothenate to form 4-phosphopantothenoylcysteine. In the second step the latter compound is decarboxylated to form 4'-phosphopantotheine. The protein is Coenzyme A biosynthesis bifunctional protein CoaBC of Thermococcus kodakarensis (strain ATCC BAA-918 / JCM 12380 / KOD1) (Pyrococcus kodakaraensis (strain KOD1)).